Reading from the N-terminus, the 97-residue chain is Ferredoxin-thioredoxin reductase, variable chain (97 aa).

It belongs to the ferredoxin thioredoxin reductase alpha subunit family. In terms of assembly, heterodimer of subunit A (variable subunit) and subunit B (catalytic subunit). Heterodimeric FTR forms a complex with ferredoxin and thioredoxin.

It localises to the plastid. The protein localises to the chloroplast. In terms of biological role, variable subunit of the ferredoxin-thioredoxin reductase (FTR), which catalyzes the two-electron reduction of thioredoxins by the electrons provided by reduced ferredoxin. In Zea mays (Maize), this protein is Ferredoxin-thioredoxin reductase, variable chain.